Consider the following 159-residue polypeptide: uncharacterized protein (159 aa).

The protein belongs to the SufE family.

This is an uncharacterized protein from Synechocystis sp. (strain ATCC 27184 / PCC 6803 / Kazusa).